The chain runs to 560 residues: Putative transport protein VS_1837 (560 aa).

5 helical membrane passes run Val5–Leu25, Leu37–Phe57, Phe66–Phe86, His91–Ser111, and Leu155–Ile175. RCK C-terminal domains lie at Arg203 to Gly292 and Lys293 to Phe376. 6 consecutive transmembrane segments (helical) span residues Leu386–Phe406, Val409–Leu429, Leu450–His470, Val478–Ala498, Ala506–Asn526, and Ala539–Ile559.

Belongs to the AAE transporter (TC 2.A.81) family. YbjL subfamily.

The protein localises to the cell membrane. The polypeptide is Putative transport protein VS_1837 (Vibrio atlanticus (strain LGP32) (Vibrio splendidus (strain Mel32))).